A 291-amino-acid chain; its full sequence is Polyamine aminopropyltransferase (291 aa).

The 241-residue stretch at 5-245 (PGPISLIEPL…YAVNYILGSL (241 aa)) folds into the PABS domain. Residue Gln-36 participates in S-methyl-5'-thioadenosine binding. Residues His-67 and Glu-91 each contribute to the spermidine site. Residues Asp-111 and 143–144 (DG) each bind S-methyl-5'-thioadenosine. The active-site Proton acceptor is Asp-164.

It belongs to the spermidine/spermine synthase family. As to quaternary structure, homodimer or homotetramer.

It localises to the cytoplasm. It catalyses the reaction S-adenosyl 3-(methylsulfanyl)propylamine + putrescine = S-methyl-5'-thioadenosine + spermidine + H(+). It functions in the pathway amine and polyamine biosynthesis; spermidine biosynthesis; spermidine from putrescine: step 1/1. In terms of biological role, catalyzes the irreversible transfer of a propylamine group from the amino donor S-adenosylmethioninamine (decarboxy-AdoMet) to putrescine (1,4-diaminobutane) to yield spermidine. In Pyrobaculum neutrophilum (strain DSM 2338 / JCM 9278 / NBRC 100436 / V24Sta) (Thermoproteus neutrophilus), this protein is Polyamine aminopropyltransferase.